We begin with the raw amino-acid sequence, 872 residues long: Tetratricopeptide repeat protein 16 (872 aa).

A disordered region spans residues 1-20; it reads MTDSDEDALKVDQGPSQDIP. TPR repeat units follow at residues 61–94, 96–128, 136–169, 251–284, 285–318, 331–364, 365–398, and 406–439; these read VREYYSRGQQCLEQADWETAVLFFSRALHLDPQL, DFYALRAEAYLQLCDFSSAAQNLRRAYSLQQDN, TFVLYLQGQCLFEQCAFLDALNVFSHAAELQPEK, AQQARQDAGILAVQGRLQHALQRINCAIENNPLD, PSFFLFRGTMYRRLQEFDGAVEDFLKVLDMVTED, LLTYNDFAVHCYRQGAYQEGVLLLNKALRDEQQE, KGLYINRGDCFFQLGNLAFAEADYQQALALSPQD, and GLLQEKMGFCEQKHRQFQKAEDHFSTAIRHNPQK. 2 disordered regions span residues 557 to 640 and 653 to 872; these read ATPE…ETET and TAMT…YEVL. Positions 577 to 590 are enriched in acidic residues; it reads KEEEEKEEEEQKEE. The segment covering 591 to 604 has biased composition (basic and acidic residues); the sequence is EEQKKEEKKEEKKP. 4 stretches are compositionally biased toward polar residues: residues 610–640, 653–675, 689–709, and 721–754; these read KVASLSESYLDQTSLASSMSFRTTCTSETET, TAMTFSDSSLLKTQSSDSGNNRE, GQRQSLSKTQATQSQRQNFSK, and KTKATQGQGRRSSKTEATQGQRQSSSEIETSQGP. Residues 762-783 show a composition bias toward basic residues; it reads KTTRSPRQRPRKVKAARGRSWR. Polar residues-rich tracts occupy residues 799-827 and 839-861; these read RSSTKTEAFYDSNWSLSKTEDVQGQGQRT and GMSSTSSKAESTWGPSPSVSKTE.

This is Tetratricopeptide repeat protein 16 (TTC16) from Macaca fascicularis (Crab-eating macaque).